Consider the following 195-residue polypeptide: Thymidine kinase (195 aa).

ATP contacts are provided by residues Gly15 to Ser22 and Asp88 to Gln91. The active-site Proton acceptor is the Glu89. 4 residues coordinate Zn(2+): Cys145, Cys148, Cys183, and Xaa186.

It belongs to the thymidine kinase family. As to quaternary structure, homotetramer.

It localises to the cytoplasm. It catalyses the reaction thymidine + ATP = dTMP + ADP + H(+). The chain is Thymidine kinase from Bacillus cereus (strain ATCC 10987 / NRS 248).